Here is an 867-residue protein sequence, read N- to C-terminus: Envelope glycoprotein gp160 (867 aa).

An N-terminal signal peptide occupies residues 1 to 31; it reads MRVKGIRKNYQHLWRWGTMLLGILMICSAAE. The Extracellular segment spans residues 32–695; sequence QLWVTVYYGV…ITNWLWYIRI (664 aa). A disulfide bond links cysteine 53 and cysteine 73. N-linked (GlcNAc...) asparagine; by host glycans are attached at residues asparagine 87, asparagine 135, asparagine 140, asparagine 143, asparagine 159, asparagine 163, asparagine 188, asparagine 189, asparagine 199, asparagine 209, asparagine 246, asparagine 253, asparagine 274, asparagine 288, and asparagine 307. Intrachain disulfides connect cysteine 118-cysteine 217, cysteine 125-cysteine 208, cysteine 130-cysteine 160, cysteine 230-cysteine 259, and cysteine 240-cysteine 251. A V1 region spans residues 130–159; that stretch reads CIDWGNDTSPNATNTTSSGGEKMEKGEMKN. The V2 stretch occupies residues 160-208; that stretch reads CSFNITTSIRDKVQKEHALFYKHDVVPINNSTKDNIKNDNSTRYRLISC. The segment at 308 to 341 is V3; the sequence is CTRPSKTTRRRIHIGPGRAFYTTKQIAGDLRQAH. An intrachain disulfide couples cysteine 308 to cysteine 342. N-linked (GlcNAc...) asparagine; by host glycosylation is found at asparagine 350, asparagine 366, and asparagine 372. The tract at residues 374–384 is CD4-binding loop; the sequence is SSGGDPEIVMH. Cystine bridges form between cysteine 388–cysteine 457 and cysteine 395–cysteine 430. The tract at residues 395-430 is V4; the sequence is CNSTQLFNSTWLSNSTWNDTEGSNNTGGNDTITLPC. 8 N-linked (GlcNAc...) asparagine; by host glycosylation sites follow: asparagine 396, asparagine 402, asparagine 408, asparagine 412, asparagine 418, asparagine 423, asparagine 460, and asparagine 475. V5 regions lie at residues 473–483 and 475–483; these read NQNETETFRPG and NETETFRPG. The interval 524–544 is fusion peptide; sequence AVGIGAVFLGFLGAAGSTMGA. Positions 585–603 are immunosuppression; the sequence is KQLQARILAVERYLKDQQL. The cysteines at positions 609 and 615 are disulfide-linked. 4 N-linked (GlcNAc...) asparagine; by host glycosylation sites follow: asparagine 622, asparagine 627, asparagine 636, and asparagine 648. The stretch at 644 to 678 forms a coiled coil; sequence REIDNYTSLIYTLIEESQNQQEKNEQELLGLDKWA. Positions 673-694 are MPER; binding to GalCer; sequence GLDKWASLWNWFTITNWLWYIR. The chain crosses the membrane as a helical span at residues 696–716; sequence FIMIVGGLVGLRIVFTVLSIV. At 717–867 the chain is on the cytoplasmic side; the sequence is NRVRQGYSPL…IRQGLERALL (151 aa). The short motif at 723-726 is the YXXL motif; contains endocytosis signal element; that stretch reads YSPL. The disordered stretch occupies residues 730–755; the sequence is TRLPAPRGPDRPEGIEEEGGDRDRDR. A lipid anchor (S-palmitoyl cysteine; by host) is attached at cysteine 775. The Di-leucine internalization motif motif lies at 866–867; that stretch reads LL.

The protein belongs to the HIV-1 env protein family. As to quaternary structure, the mature envelope protein (Env) consists of a homotrimer of non-covalently associated gp120-gp41 heterodimers. The resulting complex protrudes from the virus surface as a spike. There seems to be as few as 10 spikes on the average virion. Interacts with host CD4, CCR5 and CXCR4. Gp120 also interacts with the C-type lectins CD209/DC-SIGN and CLEC4M/DC-SIGNR (collectively referred to as DC-SIGN(R)). Gp120 and gp41 interact with GalCer. Gp120 interacts with host ITGA4/ITGB7 complex; on CD4+ T-cells, this interaction results in rapid activation of integrin ITGAL/LFA-1, which facilitates efficient cell-to-cell spreading of HIV-1. Gp120 interacts with cell-associated heparan sulfate; this interaction increases virus infectivity on permissive cells and may be involved in infection of CD4- cells. In terms of assembly, the mature envelope protein (Env) consists of a homotrimer of non-covalently associated gp120-gp41 heterodimers. The resulting complex protrudes from the virus surface as a spike. There seems to be as few as 10 spikes on the average virion. Highly glycosylated by host. The high number of glycan on the protein is reffered to as 'glycan shield' because it contributes to hide protein sequence from adaptive immune system. Post-translationally, palmitoylation of the transmembrane protein and of Env polyprotein (prior to its proteolytic cleavage) is essential for their association with host cell membrane lipid rafts. Palmitoylation is therefore required for envelope trafficking to classical lipid rafts, but not for viral replication. In terms of processing, specific enzymatic cleavages in vivo yield mature proteins. Envelope glycoproteins are synthesized as an inactive precursor that is heavily N-glycosylated and processed likely by host cell furin in the Golgi to yield the mature SU and TM proteins. The cleavage site between SU and TM requires the minimal sequence [KR]-X-[KR]-R. About 2 of the 9 disulfide bonds of gp41 are reduced by P4HB/PDI, following binding to CD4 receptor.

It localises to the virion membrane. It is found in the host cell membrane. The protein localises to the host endosome membrane. Oligomerizes in the host endoplasmic reticulum into predominantly trimers. In a second time, gp160 transits in the host Golgi, where glycosylation is completed. The precursor is then proteolytically cleaved in the trans-Golgi and thereby activated by cellular furin or furin-like proteases to produce gp120 and gp41. In terms of biological role, attaches the virus to the host lymphoid cell by binding to the primary receptor CD4. This interaction induces a structural rearrangement creating a high affinity binding site for a chemokine coreceptor like CXCR4 and/or CCR5. Acts as a ligand for CD209/DC-SIGN and CLEC4M/DC-SIGNR, which are respectively found on dendritic cells (DCs), and on endothelial cells of liver sinusoids and lymph node sinuses. These interactions allow capture of viral particles at mucosal surfaces by these cells and subsequent transmission to permissive cells. HIV subverts the migration properties of dendritic cells to gain access to CD4+ T-cells in lymph nodes. Virus transmission to permissive T-cells occurs either in trans (without DCs infection, through viral capture and transmission), or in cis (following DCs productive infection, through the usual CD4-gp120 interaction), thereby inducing a robust infection. In trans infection, bound virions remain infectious over days and it is proposed that they are not degraded, but protected in non-lysosomal acidic organelles within the DCs close to the cell membrane thus contributing to the viral infectious potential during DCs' migration from the periphery to the lymphoid tissues. On arrival at lymphoid tissues, intact virions recycle back to DCs' cell surface allowing virus transmission to CD4+ T-cells. Its function is as follows. Acts as a class I viral fusion protein. Under the current model, the protein has at least 3 conformational states: pre-fusion native state, pre-hairpin intermediate state, and post-fusion hairpin state. During fusion of viral and target intracellular membranes, the coiled coil regions (heptad repeats) assume a trimer-of-hairpins structure, positioning the fusion peptide in close proximity to the C-terminal region of the ectodomain. The formation of this structure appears to drive apposition and subsequent fusion of viral and target cell membranes. Complete fusion occurs in host cell endosomes and is dynamin-dependent, however some lipid transfer might occur at the plasma membrane. The virus undergoes clathrin-dependent internalization long before endosomal fusion, thus minimizing the surface exposure of conserved viral epitopes during fusion and reducing the efficacy of inhibitors targeting these epitopes. Membranes fusion leads to delivery of the nucleocapsid into the cytoplasm. In Homo sapiens (Human), this protein is Envelope glycoprotein gp160.